A 243-amino-acid chain; its full sequence is Zinc import ATP-binding protein ZnuC 2 (243 aa).

Residues 3-218 (LSLHQLSVKF…PEYKVLFGLD (216 aa)) enclose the ABC transporter domain. 35-42 (GPNGSGKS) contributes to the ATP binding site.

Belongs to the ABC transporter superfamily. Zinc importer (TC 3.A.1.15.5) family. In terms of assembly, the complex is composed of two ATP-binding proteins (ZnuC), two transmembrane proteins (ZnuB) and a solute-binding protein (ZnuA).

It localises to the cell inner membrane. It catalyses the reaction Zn(2+)(out) + ATP(in) + H2O(in) = Zn(2+)(in) + ADP(in) + phosphate(in) + H(+)(in). Functionally, part of the ABC transporter complex ZnuABC involved in zinc import. Responsible for energy coupling to the transport system. The polypeptide is Zinc import ATP-binding protein ZnuC 2 (Aliivibrio fischeri (strain ATCC 700601 / ES114) (Vibrio fischeri)).